Here is a 749-residue protein sequence, read N- to C-terminus: 5-methyltetrahydropteroyltriglutamate--homocysteine methyltransferase (749 aa).

5-methyltetrahydropteroyltri-L-glutamate contacts are provided by residues 18–21 and Lys112; that span reads REWK. L-homocysteine-binding positions include 420-422 and Glu473; that span reads IGS. L-methionine is bound by residues 420 to 422 and Glu473; that span reads IGS. A 5-methyltetrahydropteroyltri-L-glutamate-binding site is contributed by Trp550. Asp588 provides a ligand contact to L-homocysteine. L-methionine is bound at residue Asp588. Glu594 contributes to the 5-methyltetrahydropteroyltri-L-glutamate binding site. 3 residues coordinate Zn(2+): His630, Cys632, and Glu654. The active-site Proton donor is the His683. Residue Cys715 coordinates Zn(2+).

The protein belongs to the vitamin-B12 independent methionine synthase family. The cofactor is Zn(2+).

The catalysed reaction is 5-methyltetrahydropteroyltri-L-glutamate + L-homocysteine = tetrahydropteroyltri-L-glutamate + L-methionine. It participates in amino-acid biosynthesis; L-methionine biosynthesis via de novo pathway; L-methionine from L-homocysteine (MetE route): step 1/1. Its function is as follows. Catalyzes the transfer of a methyl group from 5-methyltetrahydrofolate to homocysteine resulting in methionine formation. This is 5-methyltetrahydropteroyltriglutamate--homocysteine methyltransferase from Staphylococcus haemolyticus (strain JCSC1435).